The primary structure comprises 341 residues: Tetraacyldisaccharide 4'-kinase (341 aa).

ATP is bound at residue 64 to 71 (AVGGSGKT).

It belongs to the LpxK family.

It carries out the reaction a lipid A disaccharide + ATP = a lipid IVA + ADP + H(+). It participates in glycolipid biosynthesis; lipid IV(A) biosynthesis; lipid IV(A) from (3R)-3-hydroxytetradecanoyl-[acyl-carrier-protein] and UDP-N-acetyl-alpha-D-glucosamine: step 6/6. Its function is as follows. Transfers the gamma-phosphate of ATP to the 4'-position of a tetraacyldisaccharide 1-phosphate intermediate (termed DS-1-P) to form tetraacyldisaccharide 1,4'-bis-phosphate (lipid IVA). This Azoarcus sp. (strain BH72) protein is Tetraacyldisaccharide 4'-kinase.